Consider the following 434-residue polypeptide: Trigger factor (434 aa).

The 86-residue stretch at 160–245 (GDKAKINFVG…LNEVQAANLP (86 aa)) folds into the PPIase FKBP-type domain.

The protein belongs to the FKBP-type PPIase family. Tig subfamily.

It is found in the cytoplasm. The enzyme catalyses [protein]-peptidylproline (omega=180) = [protein]-peptidylproline (omega=0). Involved in protein export. Acts as a chaperone by maintaining the newly synthesized protein in an open conformation. Functions as a peptidyl-prolyl cis-trans isomerase. The protein is Trigger factor of Shewanella woodyi (strain ATCC 51908 / MS32).